Consider the following 342-residue polypeptide: Cyclin pch1 (342 aa).

Residues 261 to 342 are disordered; it reads LPIDQKNGSH…TDKEMETEAS (82 aa). Polar residues predominate over residues 278-314; sequence TPSSLASVSTQATPQHQNSSGRTDSFHSLNTETPSKS. Thr300 carries the post-translational modification Phosphothreonine. Position 302 is a phosphoserine (Ser302). Over residues 329–342 the composition is skewed to basic and acidic residues; that stretch reads KSSDTDKEMETEAS.

It belongs to the cyclin family. Cyclin C subfamily. In terms of assembly, interacts with cdc2 protein kinase and with the N-terminal domain of cdk9.

It is found in the nucleus. Essential for progression through the whole cell cycle. The protein is Cyclin pch1 (pch1) of Schizosaccharomyces pombe (strain 972 / ATCC 24843) (Fission yeast).